The primary structure comprises 226 residues: N-(5'-phosphoribosyl)anthranilate isomerase (226 aa).

It belongs to the TrpF family.

It catalyses the reaction N-(5-phospho-beta-D-ribosyl)anthranilate = 1-(2-carboxyphenylamino)-1-deoxy-D-ribulose 5-phosphate. It participates in amino-acid biosynthesis; L-tryptophan biosynthesis; L-tryptophan from chorismate: step 3/5. The polypeptide is N-(5'-phosphoribosyl)anthranilate isomerase (Synechococcus sp. (strain JA-3-3Ab) (Cyanobacteria bacterium Yellowstone A-Prime)).